A 141-amino-acid polypeptide reads, in one-letter code: Nucleoside diphosphate kinase (141 aa).

Positions 11, 59, 87, 93, 104, and 114 each coordinate ATP. Residue H117 is the Pros-phosphohistidine intermediate of the active site.

It belongs to the NDK family. Homotetramer. Mg(2+) serves as cofactor.

Its subcellular location is the cytoplasm. The enzyme catalyses a 2'-deoxyribonucleoside 5'-diphosphate + ATP = a 2'-deoxyribonucleoside 5'-triphosphate + ADP. It carries out the reaction a ribonucleoside 5'-diphosphate + ATP = a ribonucleoside 5'-triphosphate + ADP. In terms of biological role, major role in the synthesis of nucleoside triphosphates other than ATP. The ATP gamma phosphate is transferred to the NDP beta phosphate via a ping-pong mechanism, using a phosphorylated active-site intermediate. This is Nucleoside diphosphate kinase from Nitrosomonas europaea (strain ATCC 19718 / CIP 103999 / KCTC 2705 / NBRC 14298).